Consider the following 1114-residue polypeptide: Transcriptional repressor NF-X1 (1114 aa).

Residues 9-26 (GTFKFNTDAAEFIPQERK) are interaction with PABPC1 and PABC4. Disordered stretches follow at residues 20 to 220 (FIPQ…CRKP), 232 to 287 (QRRY…PTKS), and 299 to 325 (KSSR…FPRG). A phosphoserine mark is found at Ser-50, Ser-81, Ser-92, Ser-126, Ser-130, and Ser-147. Polar residues-rich tracts occupy residues 72–103 (SYAS…NQPW) and 121–142 (LSEQ…SGTN). 4 stretches are compositionally biased toward basic and acidic residues: residues 143-156 (PREH…KEVV), 185-202 (LRSE…DENT), 232-248 (QRRY…EGAR), and 304-315 (VNQEKTAVRRQD). Residue Ser-320 is modified to Phosphoserine. Residues 352–403 (CMVCCELVQVTAPVWSCQSCFHVFHLNCIKKWARSPASHADGQSGWRCPACQ) form an RING-type; atypical zinc finger. NF-X1-type zinc fingers lie at residues 447–465 (CPHS…PCPA), 500–519 (CGQH…PCRI), 561–580 (CGSH…PCPR), 626–649 (CGSS…PCSR), 688–707 (CGRH…KCPL), 715–734 (CGLH…TCWQ), 826–848 (CGMH…ACKQ), and 857–878 (CGHP…ACKA). One can recognise an R3H domain in the interval 988–1056 (LKFVSDVEKE…KRNVVVTAVR (69 aa)). Positions 1071–1095 (ERETQTRPPPPIPHHRHQADKAPGS) are disordered.

This sequence belongs to the NFX1 family. As to quaternary structure, interacts with PABPC1 and PABPC4. In terms of tissue distribution, ubiquitously expressed, with highest levels in thymus.

The protein resides in the nucleus. Functionally, binds to the X-box motif of MHC class II genes and represses their expression. May play an important role in regulating the duration of an inflammatory response by limiting the period in which MHC class II molecules are induced by interferon-gamma. Together with PABPC1 or PABPC4, acts as a coactivator for TERT expression. Mediates E2-dependent ubiquitination. The chain is Transcriptional repressor NF-X1 (Nfx1) from Mus musculus (Mouse).